We begin with the raw amino-acid sequence, 330 residues long: tRNA(Ile)-lysidine synthase (330 aa).

Position 31 to 36 (31 to 36 (SGGQDS)) interacts with ATP.

It belongs to the tRNA(Ile)-lysidine synthase family.

It localises to the cytoplasm. It carries out the reaction cytidine(34) in tRNA(Ile2) + L-lysine + ATP = lysidine(34) in tRNA(Ile2) + AMP + diphosphate + H(+). Its function is as follows. Ligates lysine onto the cytidine present at position 34 of the AUA codon-specific tRNA(Ile) that contains the anticodon CAU, in an ATP-dependent manner. Cytidine is converted to lysidine, thus changing the amino acid specificity of the tRNA from methionine to isoleucine. This chain is tRNA(Ile)-lysidine synthase, found in Synechocystis sp. (strain ATCC 27184 / PCC 6803 / Kazusa).